The following is a 185-amino-acid chain: C-phycoerythrin beta chain (185 aa).

Cys-49 and Cys-60 together coordinate (2R,3E)-phycoerythrobilin. The residue at position 71 (Asn-71) is an N4-methylasparagine. (2R,3E)-phycoerythrobilin is bound by residues Cys-81 and Cys-166.

The protein belongs to the phycobiliprotein family. In terms of assembly, heterodimer of an alpha and a beta chain. In terms of processing, contains three covalently linked bilin chromophores.

The protein localises to the cellular thylakoid membrane. Functionally, light-harvesting photosynthetic bile pigment-protein from the phycobiliprotein complex. This is C-phycoerythrin beta chain (cpeB) from Pseudanabaena tenuis (strain PCC 7409).